Here is a 359-residue protein sequence, read N- to C-terminus: ATP-dependent kinase YFH7 (359 aa).

31 to 39 (GPPGSGKST) contributes to the ATP binding site.

This sequence belongs to the YFH7 family.

In terms of biological role, ATP-dependent kinase that could be involved in endoplasmic reticulum membrane assembly. The protein is ATP-dependent kinase YFH7 (YFH7) of Vanderwaltozyma polyspora (strain ATCC 22028 / DSM 70294 / BCRC 21397 / CBS 2163 / NBRC 10782 / NRRL Y-8283 / UCD 57-17) (Kluyveromyces polysporus).